We begin with the raw amino-acid sequence, 102 residues long: Small ribosomal subunit protein uS17 (102 aa).

A compositionally biased stretch (polar residues) spans 1–15 (MTDETASQEASQSTD). A disordered region spans residues 1 to 20 (MTDETASQEASQSTDAAAPA).

It belongs to the universal ribosomal protein uS17 family. Part of the 30S ribosomal subunit.

Its function is as follows. One of the primary rRNA binding proteins, it binds specifically to the 5'-end of 16S ribosomal RNA. In Frankia casuarinae (strain DSM 45818 / CECT 9043 / HFP020203 / CcI3), this protein is Small ribosomal subunit protein uS17.